We begin with the raw amino-acid sequence, 1178 residues long: Leucine--tRNA ligase, cytoplasmic (1178 aa).

2 residues coordinate L-leucine: Y54 and Y56. Residues 62–65 (HLGH) carry the 'HIGH' region motif. S169 is subject to Phosphoserine. Positions 262 to 511 (GPQEYTLVKL…DAGDALIYME (250 aa)) are editing domain. Positions 596 and 599 each coordinate L-leucine. The 'KMSKS' region motif lies at 718-722 (KMSKS). K721 is an ATP binding site. S722 is modified (phosphoserine). Residues K972 and K1049 each carry the N6-acetyllysine modification.

It belongs to the class-I aminoacyl-tRNA synthetase family.

It localises to the cytoplasm. It catalyses the reaction tRNA(Leu) + L-leucine + ATP = L-leucyl-tRNA(Leu) + AMP + diphosphate. It carries out the reaction L-methionyl-tRNA(Leu) + H2O = tRNA(Leu) + L-methionine + H(+). Its activity is regulated as follows. 5-fluoro-1,3-dihydro-1-hydroxy-1,2-benzoxaborole inhibits LARS1 by forming a covalent adduct with the 3' adenosine of tRNA(Leu) at the editing site, thus locking the enzyme in an inactive conformation. In terms of biological role, aminoacyl-tRNA synthetase that catalyzes the specific attachment of leucine to its cognate tRNA (tRNA(Leu)). It performs tRNA aminoacylation in a two-step reaction: Leu is initially activated by ATP to form a leucyl-adenylate (Leu-AMP) intermediate; then the leucyl moiety is transferred to the acceptor 3' end of the tRNA to yield leucyl-tRNA. To improve the fidelity of catalytic reactions, it is also able to hydrolyze misactivated aminoacyl-adenylate intermediates (pre-transfer editing) and mischarged aminoacyl-tRNAs (post-transfer editing). This Mus musculus (Mouse) protein is Leucine--tRNA ligase, cytoplasmic (Lars1).